The primary structure comprises 457 residues: ATP synthase subunit beta (457 aa).

Gly147–Thr154 lines the ATP pocket.

It belongs to the ATPase alpha/beta chains family. In terms of assembly, F-type ATPases have 2 components, CF(1) - the catalytic core - and CF(0) - the membrane proton channel. CF(1) has five subunits: alpha(3), beta(3), gamma(1), delta(1), epsilon(1). CF(0) has three main subunits: a(1), b(2) and c(9-12). The alpha and beta chains form an alternating ring which encloses part of the gamma chain. CF(1) is attached to CF(0) by a central stalk formed by the gamma and epsilon chains, while a peripheral stalk is formed by the delta and b chains.

It localises to the cell inner membrane. It carries out the reaction ATP + H2O + 4 H(+)(in) = ADP + phosphate + 5 H(+)(out). Its function is as follows. Produces ATP from ADP in the presence of a proton gradient across the membrane. The catalytic sites are hosted primarily by the beta subunits. This Haemophilus influenzae (strain 86-028NP) protein is ATP synthase subunit beta.